We begin with the raw amino-acid sequence, 907 residues long: Whirlin (907 aa).

The 84-residue stretch at 140–223 (LVSLRRAKAH…LVLSVYSAGR (84 aa)) folds into the PDZ 1 domain. A disordered region spans residues 243-264 (SISPPSGLPQPHGGALRQQEGD). A PDZ 2 domain is found at 279–361 (KVNLVLGDGR…LILTVKDVGR (83 aa)). Disordered stretches follow at residues 502-540 (SMKA…TVSS), 565-663 (SVDD…SSKR), 684-717 (QSPP…QTGT), and 742-815 (PQTR…PTST). Low complexity predominate over residues 521–540 (SYSDTGSSTGSHGTSTTVSS). Residues 609–626 (PPSSMPSCSGTVFSAPQN) show a composition bias toward polar residues. Positions 628–642 (SPPAGTAPTPGTSSA) are enriched in low complexity. Ser-685 is modified (phosphoserine). The span at 743–762 (QTRTASTLSQLSDSGQTLSE) shows a compositional bias: polar residues. Over residues 789-800 (SSKELPRNERPT) the composition is skewed to basic and acidic residues. Positions 816–899 (LVRVKKSAAT…TKDRDYIDFL (84 aa)) constitute a PDZ 3 domain.

As to quaternary structure, forms homooligomers. Interacts (via C-terminal PDZ domain) with MYO15A; this interaction is necessary for localization of WHRN to stereocilia tips. Interacts (via C-terminal PDZ domain) with MPP1/p55. Interacts with LRRC4C/NGL1. Interacts with MYO7A. Interacts with RPGR. Interacts with EPS8. Interacts with CASK. Interacts with CIB2. Component of USH2 complex, composed of ADGRV1, PDZD7, USH2A and WHRN. Interacts (via PDZ domains) with PDZD7; the interaction is direct. Interacts (via N-terminal PDZ domain) with USH2A (via cytoplasmic region). Interacts with ADGRV1/MASS1 (via cytoplasmic region).

Its subcellular location is the cytoplasm. The protein resides in the cell projection. It localises to the stereocilium. The protein localises to the growth cone. It is found in the photoreceptor inner segment. Its subcellular location is the synapse. In terms of biological role, involved in hearing and vision as member of the USH2 complex. Necessary for elongation and maintenance of inner and outer hair cell stereocilia in the organ of Corti in the inner ear. Involved in the maintenance of the hair bundle ankle region, which connects stereocilia in cochlear hair cells of the inner ear. In retina photoreceptors, required for the maintenance of periciliary membrane complex that seems to play a role in regulating intracellular protein transport. The protein is Whirlin of Homo sapiens (Human).